The sequence spans 196 residues: Peptidyl-tRNA hydrolase (196 aa).

Tyr-19 contacts tRNA. His-24 serves as the catalytic Proton acceptor. Tyr-68, Asn-70, and Asn-116 together coordinate tRNA.

This sequence belongs to the PTH family. Monomer.

The protein resides in the cytoplasm. The catalysed reaction is an N-acyl-L-alpha-aminoacyl-tRNA + H2O = an N-acyl-L-amino acid + a tRNA + H(+). Its function is as follows. Hydrolyzes ribosome-free peptidyl-tRNAs (with 1 or more amino acids incorporated), which drop off the ribosome during protein synthesis, or as a result of ribosome stalling. Catalyzes the release of premature peptidyl moieties from peptidyl-tRNA molecules trapped in stalled 50S ribosomal subunits, and thus maintains levels of free tRNAs and 50S ribosomes. The protein is Peptidyl-tRNA hydrolase of Aromatoleum aromaticum (strain DSM 19018 / LMG 30748 / EbN1) (Azoarcus sp. (strain EbN1)).